We begin with the raw amino-acid sequence, 238 residues long: Small heat shock protein, chloroplastic (238 aa).

The disordered stretch occupies residues 31–87 (APLSTGGRTRPLSVASAAQENRDNSVDVQVSQAQNAGNQQGNAVQRRPRRAGFDISP). The span at 58–75 (VQVSQAQNAGNQQGNAVQ) shows a compositional bias: low complexity. The sHSP domain occupies 124-238 (AARARRRMPW…ERKVIDVQVQ (115 aa)).

It belongs to the small heat shock protein (HSP20) family.

The protein resides in the plastid. The protein localises to the chloroplast. The protein is Small heat shock protein, chloroplastic (HSP21) of Triticum aestivum (Wheat).